We begin with the raw amino-acid sequence, 1141 residues long: MAEDGSEEIMFIWCEDCSQYHDSECPELGPVVMVKDSFVLSRARSSLPPNLEIRRLEDGAEGVFAITQLVKRTQFGPFESRRVAKWEKESAFPLKVFQKDGHPVCFDTSNEDDCNWMMLVRPAAEAEHQNLTAYQHGSDVYFTTSRDIPPGTELRVWYAAFYAKKMDKPMLKQAGSGVHAAGTPENSAPVESEPSQWACKVCSATFLELQLLNEHLLGHLEQAKSLPPGSQSEAAAPEKEQDTPRGEPPAVPESENVATKEQKKKPRRGRKPKVSKAEQPLVIVEDKEPTEQVAEIITEVPPDEPVSATPDERIMELVLGKLATTTTDTSSVPKFTHHQNNTITLKRSLILSSRHGIRRKLIKQLGEHKRVYQCNICSKIFQNSSNLSRHVRSHGDKLFKCEECAKLFSRKESLKQHVSYKHSRNEVDGEYRYRCGTCEKTFRIESALEFHNCRTDDKTFQCEMCFRFFSTNSNLSKHKKKHGDKKFACEVCSKMFYRKDVMLDHQRRHLEGVRRVKREDLEAGGENLVRYKKEPSGCPVCGKVFSCRSNMNKHLLTHGDKKYTCEICGRKFFRVDVLRDHIHVHFKDIALMDDHQREEFIGKIGISSEENDDNSDESADSEPHKYSCKRCQLTFGRGKEYLKHIMEVHKEKGYGCSICNRRFALKATYHAHMVIHRENLPDPNVQKYIHPCEICGRIFNSIGNLERHKLIHTGVKSHACEQCGKSFARKDMLKEHMRVHDNVREYLCAECGKGMKTKHALRHHMKLHKGIKEYECKECHRRFAQKVNMLKHCKRHTGIKDFMCELCGKTFSERNTMETHKLIHTVGKQWTCSVCDKKYVTEYMLQKHVQLTHDKVEAQSCQLCGTKVSTRASMSRHMRRKHPEVLAVRIDDLDHLPETTTIDASSIGIVQPELTLEQEDLAEGKHGKAAKRSHKRKQKPEEEAGAPVPEDATFSEYSEKETEFTGSVGDETNSAVQSIQQVVVTLGDPNVTTPSSSVGLTNITVTPITTAAATQFTNLQPVAVGHLTTPERQLQLDNSILTVTFDTVSGSAMLHNRQNDVQIHPQPEASNPQSVAHFINLTTLVNSITPLGSQLSDQHPLTWRAVPQTDVLPPSQPQAPPQQAAQPQVQAEQQQQQMYSY.

Residues 49–159 form the SET domain; the sequence is PNLEIRRLED…PGTELRVWYA (111 aa). Residues 197-219 form a C2H2-type 1 zinc finger; sequence WACKVCSATFLELQLLNEHLLGH. The interval 224-283 is disordered; the sequence is KSLPPGSQSEAAAPEKEQDTPRGEPPAVPESENVATKEQKKKPRRGRKPKVSKAEQPLVI. The segment covering 236-245 has biased composition (basic and acidic residues); it reads APEKEQDTPR. Basic residues predominate over residues 262-274; that stretch reads QKKKPRRGRKPKV. 4 consecutive C2H2-type zinc fingers follow at residues 372 to 394, 399 to 422, 460 to 482, and 487 to 509; these read YQCNICSKIFQNSSNLSRHVRSH, FKCEECAKLFSRKESLKQHVSYKH, FQCEMCFRFFSTNSNLSKHKKKH, and FACEVCSKMFYRKDVMLDHQRRH. A Glycyl lysine isopeptide (Lys-Gly) (interchain with G-Cter in SUMO2) cross-link involves residue Lys517. 2 C2H2-type zinc fingers span residues 536–558 and 563–585; these read SGCPVCGKVFSCRSNMNKHLLTH and YTCEICGRKFFRVDVLRDHIHVH. The segment at 604–623 is disordered; that stretch reads IGISSEENDDNSDESADSEP. Residues 609 to 620 are compositionally biased toward acidic residues; the sequence is EENDDNSDESAD. 9 C2H2-type zinc fingers span residues 626-649, 654-676, 690-712, 718-740, 746-768, 774-796, 802-824, 830-853, and 859-882; these read YSCKRCQLTFGRGKEYLKHIMEVH, YGCSICNRRFALKATYHAHMVIH, HPCEICGRIFNSIGNLERHKLIH, HACEQCGKSFARKDMLKEHMRVH, YLCAECGKGMKTKHALRHHMKLH, YECKECHRRFAQKVNMLKHCKRH, FMCELCGKTFSERNTMETHKLIH, WTCSVCDKKYVTEYMLQKHVQLTH, and QSCQLCGTKVSTRASMSRHMRRKH. 2 disordered regions span residues 922–973 and 1108–1141; these read AEGK…DETN and QTDVLPPSQPQAPPQQAAQPQVQAEQQQQQMYSY. Residues 927–938 show a composition bias toward basic residues; it reads GKAAKRSHKRKQ. The segment covering 1121–1141 has biased composition (low complexity); that stretch reads PQQAAQPQVQAEQQQQQMYSY.

Belongs to the class V-like SAM-binding methyltransferase superfamily. In terms of tissue distribution, detected in all tissues examined.

The protein resides in the nucleus. Functionally, sequence-specific DNA-binding transcriptional regulator. Plays a role as a molecular node in a transcriptional network regulating embryonic development and cell fate decision. Stimulates the expression of upstream key transcriptional activators and repressors of the Wnt/beta-catenin and MAPK/ERK pathways, respectively, that are essential for naive pluripotency and self-renewal maintenance of embryonic stem cells (ESCs). Specifically promotes SPRY1 and RSPO1 transcription activation through recognition and direct binding of a specific DNA sequence in their promoter regions. Involved in early embryo development. Also plays a role in induced pluripotent stem cells (iPSCs) reprogramming. This chain is PR domain zinc finger protein 15, found in Homo sapiens (Human).